Reading from the N-terminus, the 253-residue chain is Prepilin leader peptidase/N-methyltransferase (253 aa).

The chain crosses the membrane as a helical span at residues 4 to 24; that stretch reads VYLILFSIVSLILGSFSNVVI. Zn(2+)-binding residues include Cys48, Cys51, Cys73, and Cys76. The next 6 helical transmembrane spans lie at 80-100, 106-126, 129-149, 159-179, 198-218, and 230-250; these read ISLSYFIVELSFFIIAFPIYW, VDSFVLLGLYFILFNLFVIDF, MLLPNLLTYPIFMLAFIYVQQ, IIGGFAAFIISYVSNFIVRLF, TLIGVEFVPYLFLLSSIIAFI, and CLYIPLGPSIIISFVIVFFSI.

This sequence belongs to the peptidase A24 family. It depends on Zn(2+) as a cofactor.

Its subcellular location is the cell inner membrane. It catalyses the reaction Typically cleaves a -Gly-|-Phe- bond to release an N-terminal, basic peptide of 5-8 residues from type IV prepilin, and then N-methylates the new N-terminal amino group, the methyl donor being S-adenosyl-L-methionine.. Plays an essential role in type IV pili and type II pseudopili formation by proteolytically removing the leader sequence from substrate proteins and subsequently monomethylating the alpha-amino group of the newly exposed N-terminal phenylalanine. In Vibrio cholerae serotype O1 (strain ATCC 39315 / El Tor Inaba N16961), this protein is Prepilin leader peptidase/N-methyltransferase (tcpJ).